A 386-amino-acid chain; its full sequence is S-adenosylmethionine synthase (386 aa).

An ATP-binding site is contributed by His-16. Asp-18 is a Mg(2+) binding site. Residue Glu-44 coordinates K(+). Glu-57 and Gln-100 together coordinate L-methionine. Residues 100–110 form a flexible loop region; the sequence is QSGDIAMGVDE. Residues 165-167, Asp-240, 246-247, Ala-263, and Lys-267 each bind ATP; these read DAK and RK. Asp-240 lines the L-methionine pocket. Lys-271 is an L-methionine binding site.

It belongs to the AdoMet synthase family. As to quaternary structure, homotetramer; dimer of dimers. Mg(2+) is required as a cofactor. The cofactor is K(+).

The protein resides in the cytoplasm. The enzyme catalyses L-methionine + ATP + H2O = S-adenosyl-L-methionine + phosphate + diphosphate. It functions in the pathway amino-acid biosynthesis; S-adenosyl-L-methionine biosynthesis; S-adenosyl-L-methionine from L-methionine: step 1/1. Its function is as follows. Catalyzes the formation of S-adenosylmethionine (AdoMet) from methionine and ATP. The overall synthetic reaction is composed of two sequential steps, AdoMet formation and the subsequent tripolyphosphate hydrolysis which occurs prior to release of AdoMet from the enzyme. In Hahella chejuensis (strain KCTC 2396), this protein is S-adenosylmethionine synthase.